We begin with the raw amino-acid sequence, 261 residues long: Putative ankyrin repeat protein L99 (261 aa).

ANK repeat units follow at residues 21–50 (KVNP…DVHA), 51–80 (HEDY…NIHS), 81–110 (DRDL…NVNA), 112–140 (QNSA…NIHA), 142–170 (NNFC…DINA), 171–203 (DNGA…IDNC), and 231–259 (NELK…NINS).

The protein is Putative ankyrin repeat protein L99 of Acanthamoeba polyphaga (Amoeba).